Consider the following 411-residue polypeptide: Na(+)/H(+) antiporter NhaA 2 (411 aa).

The next 10 membrane-spanning stretches (helical) occupy residues 18–38, 59–79, 97–117, 127–147, 167–187, 218–238, 261–281, 297–317, 338–358, and 366–386; these read VGGS…NSPV, LTVG…VAGL, LLPI…AATI, GWAI…ALTG, LLAI…LWLL, WYCM…LGLL, PLSA…VALS, VIAG…WLAI, VLGA…LAGI, and IAKV…SALL.

This sequence belongs to the NhaA Na(+)/H(+) (TC 2.A.33) antiporter family.

The protein resides in the cell membrane. The catalysed reaction is Na(+)(in) + 2 H(+)(out) = Na(+)(out) + 2 H(+)(in). Its function is as follows. Na(+)/H(+) antiporter that extrudes sodium in exchange for external protons. The sequence is that of Na(+)/H(+) antiporter NhaA 2 from Rhodococcus jostii (strain RHA1).